The sequence spans 476 residues: Glycogen synthase (476 aa).

Lysine 15 provides a ligand contact to ADP-alpha-D-glucose.

The protein belongs to the glycosyltransferase 1 family. Bacterial/plant glycogen synthase subfamily.

The catalysed reaction is [(1-&gt;4)-alpha-D-glucosyl](n) + ADP-alpha-D-glucose = [(1-&gt;4)-alpha-D-glucosyl](n+1) + ADP + H(+). It participates in glycan biosynthesis; glycogen biosynthesis. In terms of biological role, synthesizes alpha-1,4-glucan chains using ADP-glucose. This chain is Glycogen synthase, found in Streptococcus gordonii (strain Challis / ATCC 35105 / BCRC 15272 / CH1 / DL1 / V288).